We begin with the raw amino-acid sequence, 1029 residues long: Tyrosine-protein kinase-like otk (1029 aa).

Residues 1–18 (MISIYGLVMALMMASVLA) form the signal peptide. The Extracellular segment spans residues 19–577 (SSSRFQRVPQ…GGDGFLVTRA (559 aa)). Ig-like C2-type domains lie at 21–110 (SRFQ…AKLS), 109–195 (LSVI…RVMS), 247–361 (PEDL…APIS), 364–459 (PGIL…VAIN), and 464–554 (PKFS…VQLV). Residue Asn35 is glycosylated (N-linked (GlcNAc...) asparagine). Disulfide bonds link Cys42/Cys91, Cys133/Cys184, Cys272/Cys350, and Cys395/Cys443. N-linked (GlcNAc...) asparagine glycans are attached at residues Asn332, Asn413, Asn425, Asn440, Asn453, Asn508, and Asn520. Cys486 and Cys538 form a disulfide bridge. A helical transmembrane segment spans residues 578–598 (VLITMTVALAYIVLVVGLMLW). Residues 599 to 1029 (CRYRRQARKA…LSKAMQSAEK (431 aa)) lie on the Cytoplasmic side of the membrane. 2 disordered regions span residues 613 to 675 (LSTK…KKSA) and 714 to 756 (SPSD…KTSM). The segment covering 651-669 (KSSGDAQKSDDTACSQQSR) has biased composition (polar residues). The residue at position 674 (Ser674) is a Phosphoserine. One can recognise a Protein kinase; inactive domain in the interval 688–1024 (LSELIQIGRG…QLGAALSKAM (337 aa)). Basic and acidic residues predominate over residues 716-727 (SDKDADTEKQHS).

This sequence belongs to the protein kinase superfamily. Tyr protein kinase family. Insulin receptor subfamily. Interacts with plexA; component of a receptor complex that mediates the repulsive signaling in response to Semaphorin ligands.

It is found in the cell membrane. Acts as a calcium-dependent, homophilic cell adhesion molecule that regulates neural recognition during the development of the nervous system. Component of the repulsive Plexin signaling response to regulate motor axon guidance at the embryonic stage. Also component of a receptor complex that is required in the adult visual system to innervate the lamina layer; specific targeting of R1-R6 axons. This chain is Tyrosine-protein kinase-like otk, found in Drosophila simulans (Fruit fly).